A 716-amino-acid polypeptide reads, in one-letter code: ATP-dependent zinc metalloprotease FTSH 1, chloroplastic (716 aa).

Residues 1–48 (MASNSLLRSSSNFFLGSHIIISSPTPKTTRKPSFPFSFVSRAKYQITR) constitute a chloroplast transit peptide. The transit peptide at 49–86 (SSQDENSPNGKPNSPFSSQVALAAILLSSISSSPLALA) directs the protein to the thylakoid. A helical transmembrane segment spans residues 204–224 (FTVIGNLIFPLLAFGGLFLLF). 302–309 (GPPGTGKT) lines the ATP pocket. A Zn(2+)-binding site is contributed by His-524. Glu-525 is a catalytic residue. Zn(2+) is bound by residues His-528 and Asp-605.

It in the N-terminal section; belongs to the AAA ATPase family. This sequence in the C-terminal section; belongs to the peptidase M41 family. Interacts with CHIP and HSP70. Heterohexamers with FTSH2, FTSH5 and FTSH8. Requires Zn(2+) as cofactor. In terms of processing, the FTSH1 precursor is ubiquitinated by CHIP in the cytoplasm. In terms of tissue distribution, ubiquitous.

It is found in the plastid. Its subcellular location is the chloroplast thylakoid membrane. Functionally, part of a complex that function as an ATP-dependent zinc metallopeptidase. Involved in the thylakoid formation and in the removal of damaged D1 in the photosystem II, preventing cell death under high-intensity light conditions. This is ATP-dependent zinc metalloprotease FTSH 1, chloroplastic (FTSH1) from Arabidopsis thaliana (Mouse-ear cress).